The primary structure comprises 601 residues: ATP-dependent RNA helicase DDX55 (601 aa).

The Q motif signature appears at 9–37 (WESLPVPLHPKVLSVLRELGFPYMTPVQS). In terms of domain architecture, Helicase ATP-binding spans 40-223 (IPLFMKNKDV…RAGLRNPVRI (184 aa)). ATP is bound at residue 53 to 60 (AVTGSGKT). The DEAD box motif lies at 171–174 (DEAD). One can recognise a Helicase C-terminal domain in the interval 254–402 (KFNQLVHFLR…EMKLQKNTAD (149 aa)). Residues 502-514 (QQRKEKTENDGRR) are compositionally biased toward basic and acidic residues. Disordered regions lie at residues 502 to 553 (QQRK…EDME) and 576 to 601 (EKGL…EDDC). Residues 515 to 538 (KFIKNKAWSKQKAKKEKKKKLTEK) show a composition bias toward basic residues. The important for nuclear localization stretch occupies residues 534–563 (KLTEKRKREEGSDVEDEDMEELLNDTRLLK). Residues Ser-545 and Ser-595 each carry the phosphoserine modification.

This sequence belongs to the DEAD box helicase family. DDX55/SPB4 subfamily. Interacts with 28S rRNA. Interacts with double-stranded RNA substrates in vitro; the interaction stimulates ATPase activity.

The protein resides in the nucleus. Its subcellular location is the nucleoplasm. The catalysed reaction is ATP + H2O = ADP + phosphate + H(+). Its function is as follows. Probable ATP-binding RNA helicase. Has ATPase activity and is involved in the maturation of precursor large subunit rRNAs. The chain is ATP-dependent RNA helicase DDX55 (DDX55) from Bos taurus (Bovine).